The chain runs to 536 residues: Zinc finger CCCH domain-containing protein 18 (536 aa).

Residues 156–183 form a C3H1-type zinc finger; it reads EFPVKICHYFNKGFCKHGNNCRYFHGQI. The 84-residue stretch at 211–294 folds into the HTH OST-type domain; the sequence is SLEKLEGEII…HGQHSVILAE (84 aa). In terms of domain architecture, RRM spans 317–392; sequence RQIYLTFPAE…ARVLVKPYRE (76 aa).

Functionally, possesses ribonuclease activity in vitro. The polypeptide is Zinc finger CCCH domain-containing protein 18 (Arabidopsis thaliana (Mouse-ear cress)).